Here is a 427-residue protein sequence, read N- to C-terminus: Histidine--tRNA ligase (427 aa).

It belongs to the class-II aminoacyl-tRNA synthetase family. As to quaternary structure, homodimer.

The protein resides in the cytoplasm. It carries out the reaction tRNA(His) + L-histidine + ATP = L-histidyl-tRNA(His) + AMP + diphosphate + H(+). The chain is Histidine--tRNA ligase from Chloroherpeton thalassium (strain ATCC 35110 / GB-78).